A 657-amino-acid chain; its full sequence is MALDITFPDGNVKQFPDGTTVKAITEGISNSLAKKAVAGKLDGDLIAYDEPIAHSGQLQIMTKDDAEGLTVLRQTAAFVLAAALKDLYPDIHFGQGQATEDGFYYDTDRADGQVSVDDLPTVQKKMEAIIKENAALEPVVLSRAEAFQAFKNDPFKKQLVEAAGDPIKGYKLGDFVDFEEKVLLPSLKDLKHLKLLSVAGAYWQGKSSNPMLQRIYGTAYWSEKGLEDDAKRRQEAAEHDHRVIGRDLDLFFVDPKVGAGLPYWMPNGATIRRVIERYIIDKEIADGYEHVYTPVLANLDLYKTSGHWDHYREDMFPPMDMGDGEMLELRPMNCPSHIQIYNHHIRSYRELPLRIAELGMMHRYEKSGALSGLQRVREMTLNDGHTFVALDQVQEEFKKILRLIMDVYEDFNITDYSFRLSYRDPKNTEKYFDDDEMWTRSQSMLKGAMDDLKLDYYEAEGEAAFYGPKLDIQTKTALGNDETMSTIQLDFMLPERFNLTYVGKDGEEHRPVMIHRGIVGTMERFIAYLTEIYKGAFPTWLAPTQAVLIPVNNDLHLDYVNRIKKQMLVAGLRVKVDDRNEKMGYKIREAQTKKIPYTVVVGDKELNDAAVSVRRYGDEHTEEEAGNMFIDALVAEVKNYSRDGKTKPGEATKVLGD.

The TGS domain maps to 1–62; sequence MALDITFPDG…AHSGQLQIMT (62 aa). The segment at 240 to 538 is catalytic; sequence DHRVIGRDLD…LTEIYKGAFP (299 aa). C334, H385, and H515 together coordinate Zn(2+).

This sequence belongs to the class-II aminoacyl-tRNA synthetase family. In terms of assembly, homodimer. The cofactor is Zn(2+).

The protein resides in the cytoplasm. It catalyses the reaction tRNA(Thr) + L-threonine + ATP = L-threonyl-tRNA(Thr) + AMP + diphosphate + H(+). Functionally, catalyzes the attachment of threonine to tRNA(Thr) in a two-step reaction: L-threonine is first activated by ATP to form Thr-AMP and then transferred to the acceptor end of tRNA(Thr). Also edits incorrectly charged L-seryl-tRNA(Thr). This Lacticaseibacillus paracasei (strain ATCC 334 / BCRC 17002 / CCUG 31169 / CIP 107868 / KCTC 3260 / NRRL B-441) (Lactobacillus paracasei) protein is Threonine--tRNA ligase.